A 125-amino-acid chain; its full sequence is Large ribosomal subunit protein bL12 (125 aa).

This sequence belongs to the bacterial ribosomal protein bL12 family. Homodimer. Part of the ribosomal stalk of the 50S ribosomal subunit. Forms a multimeric L10(L12)X complex, where L10 forms an elongated spine to which 2 to 4 L12 dimers bind in a sequential fashion. Binds GTP-bound translation factors.

In terms of biological role, forms part of the ribosomal stalk which helps the ribosome interact with GTP-bound translation factors. Is thus essential for accurate translation. This chain is Large ribosomal subunit protein bL12, found in Helicobacter pylori (strain ATCC 700392 / 26695) (Campylobacter pylori).